A 215-amino-acid polypeptide reads, in one-letter code: Endonuclease III (215 aa).

A HhH domain is found at 113-132; the sequence is REDLESLPGVGRKTANVILN. [4Fe-4S] cluster-binding residues include Cys-192, Cys-199, Cys-202, and Cys-208.

This sequence belongs to the Nth/MutY family. [4Fe-4S] cluster is required as a cofactor.

It catalyses the reaction 2'-deoxyribonucleotide-(2'-deoxyribose 5'-phosphate)-2'-deoxyribonucleotide-DNA = a 3'-end 2'-deoxyribonucleotide-(2,3-dehydro-2,3-deoxyribose 5'-phosphate)-DNA + a 5'-end 5'-phospho-2'-deoxyribonucleoside-DNA + H(+). DNA repair enzyme that has both DNA N-glycosylase activity and AP-lyase activity. The DNA N-glycosylase activity releases various damaged pyrimidines from DNA by cleaving the N-glycosidic bond, leaving an AP (apurinic/apyrimidinic) site. The AP-lyase activity cleaves the phosphodiester bond 3' to the AP site by a beta-elimination, leaving a 3'-terminal unsaturated sugar and a product with a terminal 5'-phosphate. The polypeptide is Endonuclease III (Buchnera aphidicola subsp. Baizongia pistaciae (strain Bp)).